The chain runs to 146 residues: UPF0260 protein Ssed_2516 (146 aa).

This sequence belongs to the UPF0260 family.

This chain is UPF0260 protein Ssed_2516, found in Shewanella sediminis (strain HAW-EB3).